The primary structure comprises 206 residues: Inosine triphosphate pyrophosphatase (206 aa).

21-26 (TGNAKK) lines the ITP pocket. E49 provides a ligand contact to Mg(2+). ITP-binding positions include K61, 77–78 (DT), K94, 153–156 (FGWD), K176, and 181–182 (HR).

The protein belongs to the HAM1 NTPase family. Homodimer. Mg(2+) serves as cofactor. Mn(2+) is required as a cofactor.

Its subcellular location is the cytoplasm. It catalyses the reaction ITP + H2O = IMP + diphosphate + H(+). The catalysed reaction is dITP + H2O = dIMP + diphosphate + H(+). The enzyme catalyses XTP + H2O = XMP + diphosphate + H(+). In terms of biological role, pyrophosphatase that hydrolyzes non-canonical purine nucleotides such as inosine triphosphate (ITP), deoxyinosine triphosphate (dITP) or xanthosine 5'-triphosphate (XTP) to their respective monophosphate derivatives. The enzyme does not distinguish between the deoxy- and ribose forms. Probably excludes non-canonical purines from RNA and DNA precursor pools, thus preventing their incorporation into RNA and DNA and avoiding chromosomal lesions. The protein is Inosine triphosphate pyrophosphatase of Vitis vinifera (Grape).